The sequence spans 680 residues: Lipase 1 (680 aa).

The signal sequence occupies residues 1 to 34 (MKSQNKYSIRKFSVGASSILIATLLFLSGGQAQA). The propeptide occupies 35–290 (AEKQVNMGNS…AKAKGDQTNK (256 aa)). Disordered stretches follow at residues 39–58 (VNMG…GDQQ) and 82–260 (KNLH…KNGL). The segment covering 40 to 58 (NMGNSQEDTVTAQSIGDQQ) has biased composition (polar residues). Over residues 84-112 (LHNDKTISEENHRKTDDLNKDQLKDDKKS) the composition is skewed to basic and acidic residues. 2 stretches are compositionally biased toward polar residues: residues 162–193 (SQDL…SQRE) and 204–223 (QPQQ…FNNE). The segment covering 224-234 (QEVKPQKDEKT) has biased composition (basic and acidic residues). Residues 235 to 246 (LSVSDLKNNQKS) show a composition bias toward polar residues. The active-site Nucleophile is serine 408. The Charge relay system role is filled by aspartate 600. Aspartate 638 lines the Ca(2+) pocket. The Charge relay system role is filled by histidine 639. 3 residues coordinate Ca(2+): aspartate 641, aspartate 646, and aspartate 649.

This sequence belongs to the AB hydrolase superfamily. Lipase family.

It localises to the secreted. It carries out the reaction a triacylglycerol + H2O = a diacylglycerol + a fatty acid + H(+). In Staphylococcus aureus (strain MRSA252), this protein is Lipase 1 (lip1).